Here is a 509-residue protein sequence, read N- to C-terminus: Cytochrome P450 4A10 (509 aa).

Helical transmembrane passes span 15–35 and 121–141; these read LSGF…VKAV and LLAP…WFQH. Glu320 contacts heme. Ser439 bears the Phosphoserine mark. Residue Cys456 participates in heme binding.

Belongs to the cytochrome P450 family. Heme serves as cofactor. Highly expressed in the kidneys of both genders.

The protein resides in the endoplasmic reticulum membrane. Its subcellular location is the microsome membrane. It catalyses the reaction an omega-methyl-long-chain fatty acid + reduced [NADPH--hemoprotein reductase] + O2 = an omega-hydroxy-long-chain fatty acid + oxidized [NADPH--hemoprotein reductase] + H2O + H(+). It carries out the reaction dodecanoate + reduced [NADPH--hemoprotein reductase] + O2 = 12-hydroxydodecanoate + oxidized [NADPH--hemoprotein reductase] + H2O + H(+). The enzyme catalyses dodecanoate + reduced [NADPH--hemoprotein reductase] + O2 = 11-hydroxydodecanoate + oxidized [NADPH--hemoprotein reductase] + H2O + H(+). The catalysed reaction is tetradecanoate + reduced [NADPH--hemoprotein reductase] + O2 = 14-hydroxytetradecanoate + oxidized [NADPH--hemoprotein reductase] + H2O + H(+). It catalyses the reaction hexadecanoate + reduced [NADPH--hemoprotein reductase] + O2 = 16-hydroxyhexadecanoate + oxidized [NADPH--hemoprotein reductase] + H2O + H(+). It carries out the reaction (9Z)-octadecenoate + reduced [NADPH--hemoprotein reductase] + O2 = 18-hydroxy-(9Z)-octadecenoate + oxidized [NADPH--hemoprotein reductase] + H2O + H(+). The enzyme catalyses (9Z,12Z)-octadecadienoate + reduced [NADPH--hemoprotein reductase] + O2 = 18-hydroxy-(9Z,12Z)-octadecadienoate + oxidized [NADPH--hemoprotein reductase] + H2O + H(+). The catalysed reaction is (9Z,12Z)-octadecadienoate + reduced [NADPH--hemoprotein reductase] + O2 = 17-hydroxy-(9Z,12Z)-octadecadienoate + oxidized [NADPH--hemoprotein reductase] + H2O + H(+). It catalyses the reaction (5Z,8Z,11Z,14Z)-eicosatetraenoate + reduced [NADPH--hemoprotein reductase] + O2 = 20-hydroxy-(5Z,8Z,11Z,14Z)-eicosatetraenoate + oxidized [NADPH--hemoprotein reductase] + H2O + H(+). It carries out the reaction 8,9-epoxy-(5Z,11Z,14Z)-eicosatrienoate + reduced [NADPH--hemoprotein reductase] + O2 = 20-hydroxy-8,9-epoxy-(5Z,11Z,14Z)-eicosatrienoate + oxidized [NADPH--hemoprotein reductase] + H2O + H(+). In terms of biological role, a cytochrome P450 monooxygenase involved in the metabolism of fatty acids. Catalyzes predominantly the oxidation of the terminal carbon (omega-oxidation) of long-chain fatty acids. Acts as a major omega-hydroxylase for dodecanoic (lauric) acid in liver. In kidney, may play an important role in omega-hydroxylation of (5Z,8Z,11Z,14Z)-eicosatetraenoic acid (arachidonate) to 20-hydroxyeicosatetraenoic acid (20-HETE), a signaling molecule acting both as vasoconstrictive and natriuretic with overall effect on arterial blood pressure. Also participates in the formation of anti-inflammatory hydroxyepoxyeicosatrienoic acids (HEETs) in kidney by converting 8,9-epoxyeicosatrienoic acid (EET) to 20,8,9-HEET, an activator of PPARA. Displays substantially lower fatty acid omega-1 hydroxylase activity. Mechanistically, uses molecular oxygen inserting one oxygen atom into a substrate, and reducing the second into a water molecule, with two electrons provided by NADPH via cytochrome P450 reductase (CPR; NADPH-ferrihemoprotein reductase). The sequence is that of Cytochrome P450 4A10 from Mus musculus (Mouse).